We begin with the raw amino-acid sequence, 241 residues long: Ribonuclease PH (241 aa).

Residues R86 and 124-126 (GTR) each bind phosphate.

The protein belongs to the RNase PH family. As to quaternary structure, homohexameric ring arranged as a trimer of dimers.

The enzyme catalyses tRNA(n+1) + phosphate = tRNA(n) + a ribonucleoside 5'-diphosphate. Its function is as follows. Phosphorolytic 3'-5' exoribonuclease that plays an important role in tRNA 3'-end maturation. Removes nucleotide residues following the 3'-CCA terminus of tRNAs; can also add nucleotides to the ends of RNA molecules by using nucleoside diphosphates as substrates, but this may not be physiologically important. Probably plays a role in initiation of 16S rRNA degradation (leading to ribosome degradation) during starvation. This is Ribonuclease PH from Hamiltonella defensa subsp. Acyrthosiphon pisum (strain 5AT).